The primary structure comprises 350 residues: Biotin synthase (350 aa).

The Radical SAM core domain occupies 41–268 (NEVQISRLLS…KSRVRLSAGR (228 aa)). Cysteine 56, cysteine 60, and cysteine 63 together coordinate [4Fe-4S] cluster. Residues cysteine 100, cysteine 131, cysteine 191, and arginine 263 each coordinate [2Fe-2S] cluster.

The protein belongs to the radical SAM superfamily. Biotin synthase family. In terms of assembly, homodimer. It depends on [4Fe-4S] cluster as a cofactor. The cofactor is [2Fe-2S] cluster.

The enzyme catalyses (4R,5S)-dethiobiotin + (sulfur carrier)-SH + 2 reduced [2Fe-2S]-[ferredoxin] + 2 S-adenosyl-L-methionine = (sulfur carrier)-H + biotin + 2 5'-deoxyadenosine + 2 L-methionine + 2 oxidized [2Fe-2S]-[ferredoxin]. It functions in the pathway cofactor biosynthesis; biotin biosynthesis; biotin from 7,8-diaminononanoate: step 2/2. Functionally, catalyzes the conversion of dethiobiotin (DTB) to biotin by the insertion of a sulfur atom into dethiobiotin via a radical-based mechanism. In Shewanella frigidimarina (strain NCIMB 400), this protein is Biotin synthase.